The sequence spans 143 residues: Hemoglobin subunit alpha-2 (143 aa).

Serine 2 is modified (N-acetylserine). Residues 2–143 form the Globin domain; it reads SLTEKDKAAV…LSLALAEKYR (142 aa). Histidine 60 contacts O2. A heme b-binding site is contributed by histidine 89.

The protein belongs to the globin family. In terms of assembly, hb2 is a heterotetramer of two alpha-2 chains and two beta-1 chains; Hb3 is a heterotetramer of two alpha-2 chains and two beta-2 chains. Red blood cells.

Involved in oxygen transport from gills to the various peripheral tissues. This is Hemoglobin subunit alpha-2 (hba2) from Anarhichas minor (Arctic spotted wolffish).